The following is a 340-amino-acid chain: Anthranilate phosphoribosyltransferase (340 aa).

5-phospho-alpha-D-ribose 1-diphosphate-binding positions include G80, 83 to 84 (GD), T88, 90 to 93 (NIST), 108 to 116 (KHGNRAMSS), and S120. An anthranilate-binding site is contributed by G80. Residue S92 coordinates Mg(2+). Residue N111 participates in anthranilate binding. Residue R166 coordinates anthranilate. Mg(2+) contacts are provided by D225 and E226.

Belongs to the anthranilate phosphoribosyltransferase family. Homodimer. It depends on Mg(2+) as a cofactor.

The catalysed reaction is N-(5-phospho-beta-D-ribosyl)anthranilate + diphosphate = 5-phospho-alpha-D-ribose 1-diphosphate + anthranilate. The protein operates within amino-acid biosynthesis; L-tryptophan biosynthesis; L-tryptophan from chorismate: step 2/5. Functionally, catalyzes the transfer of the phosphoribosyl group of 5-phosphorylribose-1-pyrophosphate (PRPP) to anthranilate to yield N-(5'-phosphoribosyl)-anthranilate (PRA). The sequence is that of Anthranilate phosphoribosyltransferase from Roseiflexus castenholzii (strain DSM 13941 / HLO8).